Consider the following 173-residue polypeptide: NADH-ubiquinone oxidoreductase chain 6 (173 aa).

The next 5 membrane-spanning stretches (helical) occupy residues M1–S21, A24–V44, L53–L73, S86–W106, and Y139–L159.

The protein belongs to the complex I subunit 6 family.

The protein resides in the mitochondrion membrane. It catalyses the reaction a ubiquinone + NADH + 5 H(+)(in) = a ubiquinol + NAD(+) + 4 H(+)(out). In terms of biological role, core subunit of the mitochondrial membrane respiratory chain NADH dehydrogenase (Complex I) that is believed to belong to the minimal assembly required for catalysis. Complex I functions in the transfer of electrons from NADH to the respiratory chain. The immediate electron acceptor for the enzyme is believed to be ubiquinone. The polypeptide is NADH-ubiquinone oxidoreductase chain 6 (MT-ND6) (Formosania lacustris (Oriental stream loach)).